Consider the following 272-residue polypeptide: MPELPEVETVRRELEKRIVGQKIVSIEATYPRMVLTGFEQLKKELTGKTIHGISRRGKYLIFEIGEKDRLISHLRMEGKYRLASLNVPMEKHDHLALKFTDEQLIYADVRKFGTWELISTDQVLPYFLKKNIGPEPTYETFDEQIFREKLQKSTKKIKPFLLEQTLVAGLGNIYVDEVLWLAKIHPEKVANQLTESSIHLLHDSIIEILQKAIKLGGSSIRTYSALGSTGKMQDELRVYGKTGEKCVRCGNEIQKIKVAGRGTHFCPFCQQK.

Pro2 acts as the Schiff-base intermediate with DNA in catalysis. Glu3 (proton donor) is an active-site residue. Residue Lys58 is the Proton donor; for beta-elimination activity of the active site. His92 and Arg110 together coordinate DNA. The FPG-type zinc finger occupies 237–271 (RVYGKTGEKCVRCGNEIQKIKVAGRGTHFCPFCQQ). Residue Arg261 is the Proton donor; for delta-elimination activity of the active site.

The protein belongs to the FPG family. In terms of assembly, monomer. Requires Zn(2+) as cofactor.

The catalysed reaction is Hydrolysis of DNA containing ring-opened 7-methylguanine residues, releasing 2,6-diamino-4-hydroxy-5-(N-methyl)formamidopyrimidine.. It catalyses the reaction 2'-deoxyribonucleotide-(2'-deoxyribose 5'-phosphate)-2'-deoxyribonucleotide-DNA = a 3'-end 2'-deoxyribonucleotide-(2,3-dehydro-2,3-deoxyribose 5'-phosphate)-DNA + a 5'-end 5'-phospho-2'-deoxyribonucleoside-DNA + H(+). Involved in base excision repair of DNA damaged by oxidation or by mutagenic agents. Acts as a DNA glycosylase that recognizes and removes damaged bases. Has a preference for oxidized purines, such as 7,8-dihydro-8-oxoguanine (8-oxoG). Has AP (apurinic/apyrimidinic) lyase activity and introduces nicks in the DNA strand. Cleaves the DNA backbone by beta-delta elimination to generate a single-strand break at the site of the removed base with both 3'- and 5'-phosphates. This Lactococcus lactis subsp. lactis (strain IL1403) (Streptococcus lactis) protein is Formamidopyrimidine-DNA glycosylase (mutM).